Consider the following 285-residue polypeptide: Alginate lyase (285 aa).

Residues 1 to 20 form the signal peptide; that stretch reads MIKSNLVISSLAIVSSMSYA.

The protein belongs to the polysaccharide lyase 6 family.

The catalysed reaction is Eliminative cleavage of alginate to give oligosaccharides with 4-deoxy-alpha-L-erythro-hex-4-enuronosyl groups at their non-reducing ends and beta-D-mannuronate at their reducing end.. The protein is Alginate lyase (alxM) of Photobacterium sp. (strain ATCC 43367).